Here is a 397-residue protein sequence, read N- to C-terminus: uncharacterized protein (397 aa).

This is an uncharacterized protein from Thermotoga maritima (strain ATCC 43589 / DSM 3109 / JCM 10099 / NBRC 100826 / MSB8).